Consider the following 1234-residue polypeptide: DNA-directed RNA polymerase subunit beta (1234 aa).

This sequence belongs to the RNA polymerase beta chain family. The RNAP catalytic core consists of 2 alpha, 1 beta, 1 beta' and 1 omega subunit. When a sigma factor is associated with the core the holoenzyme is formed, which can initiate transcription.

The catalysed reaction is RNA(n) + a ribonucleoside 5'-triphosphate = RNA(n+1) + diphosphate. DNA-dependent RNA polymerase catalyzes the transcription of DNA into RNA using the four ribonucleoside triphosphates as substrates. This chain is DNA-directed RNA polymerase subunit beta, found in Clostridium perfringens (strain SM101 / Type A).